The following is a 407-amino-acid chain: Dephospho-CoA kinase (407 aa).

The DPCK domain maps to 3–201; that stretch reads RIGLTGGIGA…ERIVPFAHNL (199 aa). Position 11 to 16 (11 to 16) interacts with ATP; sequence GAGKSA. The segment at 196–407 is UPF0157; sequence PFAHNLSTRQ…DWADSTGWKP (212 aa).

In the N-terminal section; belongs to the CoaE family. This sequence in the C-terminal section; belongs to the UPF0157 (GrpB) family.

It is found in the cytoplasm. It catalyses the reaction 3'-dephospho-CoA + ATP = ADP + CoA + H(+). Its pathway is cofactor biosynthesis; coenzyme A biosynthesis; CoA from (R)-pantothenate: step 5/5. Functionally, catalyzes the phosphorylation of the 3'-hydroxyl group of dephosphocoenzyme A to form coenzyme A. The protein is Dephospho-CoA kinase of Mycolicibacterium paratuberculosis (strain ATCC BAA-968 / K-10) (Mycobacterium paratuberculosis).